Here is a 430-residue protein sequence, read N- to C-terminus: Glutamate-1-semialdehyde 2,1-aminomutase (430 aa).

An N6-(pyridoxal phosphate)lysine modification is found at Lys265.

This sequence belongs to the class-III pyridoxal-phosphate-dependent aminotransferase family. HemL subfamily. As to quaternary structure, homodimer. Requires pyridoxal 5'-phosphate as cofactor.

The protein localises to the cytoplasm. It carries out the reaction (S)-4-amino-5-oxopentanoate = 5-aminolevulinate. The protein operates within porphyrin-containing compound metabolism; protoporphyrin-IX biosynthesis; 5-aminolevulinate from L-glutamyl-tRNA(Glu): step 2/2. The sequence is that of Glutamate-1-semialdehyde 2,1-aminomutase from Shewanella oneidensis (strain ATCC 700550 / JCM 31522 / CIP 106686 / LMG 19005 / NCIMB 14063 / MR-1).